The primary structure comprises 300 residues: Solute carrier family 25 member 35 (300 aa).

3 Solcar repeats span residues 1–90 (MDFL…AEAG), 100–193 (HSPA…TKDL), and 203–294 (QSWK…LRSL). 6 consecutive transmembrane segments (helical) span residues 38–58 (TYQRHYRNVFHAFITIGKVDG), 59–79 (LAALQKGLAPALLYQFLMNGI), 91–119 (GYLHTAEGTHSPARSAAAGAMAGVMGAYL), 169–190 (ALGGLPRVIVGSSTQLCTFSST), 205–225 (WKLALVAAMMSGIAVVLAMAP), and 277–300 (LGPHTILSLFFWDQLRSLYYTDTK).

This sequence belongs to the mitochondrial carrier (TC 2.A.29) family.

It localises to the mitochondrion inner membrane. The catalysed reaction is a dicarboxylate(in) + sulfate(out) = a dicarboxylate(out) + sulfate(in). Putative antiporter that exchanges dicarboxylates and sulfur oxoanions across the inner membrane of mitochondria. The protein is Solute carrier family 25 member 35 (SLC25A35) of Homo sapiens (Human).